A 162-amino-acid chain; its full sequence is Putative 4-hydroxy-4-methyl-2-oxoglutarate aldolase (162 aa).

Substrate-binding positions include 75–78 (GDML) and Arg-97. Asp-98 lines the a divalent metal cation pocket.

Belongs to the class II aldolase/RraA-like family. Homotrimer. Requires a divalent metal cation as cofactor.

The enzyme catalyses 4-hydroxy-4-methyl-2-oxoglutarate = 2 pyruvate. The catalysed reaction is oxaloacetate + H(+) = pyruvate + CO2. In terms of biological role, catalyzes the aldol cleavage of 4-hydroxy-4-methyl-2-oxoglutarate (HMG) into 2 molecules of pyruvate. Also contains a secondary oxaloacetate (OAA) decarboxylase activity due to the common pyruvate enolate transition state formed following C-C bond cleavage in the retro-aldol and decarboxylation reactions. The sequence is that of Putative 4-hydroxy-4-methyl-2-oxoglutarate aldolase from Pseudomonas aeruginosa (strain LESB58).